Reading from the N-terminus, the 595-residue chain is MSHIRNFSIIAHIDHGKSTLADRFIQMCGGLSEREMEAQVLDSMDLERERGITIKAHSVTLYYKAKDGITYQLNFIDTPGHVDFTYEVSRSLAACEGALLVVDAGQGVEAQSVANCYTAIEQGLEVMPVLNKMDLPQADPDRVKEEIEKIIGIDATDAVACSAKSGMGVDEVLERLVATIPPPTGDIEAPLQALIIDSWFDNYLGVVSLVRVRHGRVKKGDKILVKSTGKLHLVDSVGVFNPKHSATVDLKAGEVGFIIAGIKDIHGAPVGDTLTLSTTPDVDVLPGFKRIQPQVYAGLFPVSSDDFEDFREALQKLTLNDSSLQYSPESSDALGFGFRCGFLGMLHMEIIQERLEREYNLDLITTAPTVIFELLLKTGETIYVDNPSKLPDLSAIEDMREPIVRANILVPQEHLGNVITLCIEKRGVQHDMLFLGTQVQVSYDLPMNEVVLDFFDRLKSVSRGYASLDYHFDRYQSANLVKLDVLINGEKVDALALIVHRDNAHYKGRALTEKMKELIPRQMFDVAIQAAIGGQIVARTTVKALRKNVLAKCYGGDVSRKRKLLEKQKAGKKRMKQVGNVEIPQEAFLAVLRLE.

Residues 2–184 form the tr-type G domain; the sequence is SHIRNFSIIA…RLVATIPPPT (183 aa). GTP contacts are provided by residues 14 to 19 and 131 to 134; these read DHGKST and NKMD.

This sequence belongs to the TRAFAC class translation factor GTPase superfamily. Classic translation factor GTPase family. LepA subfamily.

The protein localises to the cell inner membrane. The catalysed reaction is GTP + H2O = GDP + phosphate + H(+). Its function is as follows. Required for accurate and efficient protein synthesis under certain stress conditions. May act as a fidelity factor of the translation reaction, by catalyzing a one-codon backward translocation of tRNAs on improperly translocated ribosomes. Back-translocation proceeds from a post-translocation (POST) complex to a pre-translocation (PRE) complex, thus giving elongation factor G a second chance to translocate the tRNAs correctly. Binds to ribosomes in a GTP-dependent manner. The polypeptide is Elongation factor 4 (Pseudomonas syringae pv. tomato (strain ATCC BAA-871 / DC3000)).